A 429-amino-acid polypeptide reads, in one-letter code: Glucose-1-phosphate adenylyltransferase (429 aa).

Alpha-D-glucose 1-phosphate-binding positions include Gly-162, 177 to 178 (EK), and Ser-209.

This sequence belongs to the bacterial/plant glucose-1-phosphate adenylyltransferase family. Homotetramer.

It catalyses the reaction alpha-D-glucose 1-phosphate + ATP + H(+) = ADP-alpha-D-glucose + diphosphate. Its pathway is glycan biosynthesis; glycogen biosynthesis. Functionally, involved in the biosynthesis of ADP-glucose, a building block required for the elongation reactions to produce glycogen. Catalyzes the reaction between ATP and alpha-D-glucose 1-phosphate (G1P) to produce pyrophosphate and ADP-Glc. This chain is Glucose-1-phosphate adenylyltransferase, found in Trichormus variabilis (strain ATCC 29413 / PCC 7937) (Anabaena variabilis).